A 279-amino-acid chain; its full sequence is uncharacterized protein (279 aa).

Helical transmembrane passes span 29 to 49, 77 to 97, 105 to 125, 147 to 167, 186 to 206, and 240 to 260; these read PYNMIAGAIGAVVLTILALVF, VLYALAPLIPLVILVIGGTSL, WTKMGVPQAMLIGAIYGIIVT, VLGIIIAASVFVAGLKSTGAV, TIGPFLMGLITGSGDAAAIAF, and PIAGVTIVCAGLAMVSPVEMV.

This sequence belongs to the DcuC/DcuD transporter (TC 2.A.61) family.

It localises to the cell membrane. This is an uncharacterized protein from Haemophilus influenzae (strain ATCC 51907 / DSM 11121 / KW20 / Rd).